We begin with the raw amino-acid sequence, 67 residues long: ATP synthase F(0) complex subunit 8 (67 aa).

Residues 8–24 traverse the membrane as a helical segment; sequence TWFINIVSMILTLFIVF. At lysine 54 the chain carries N6-acetyllysine; alternate. Residue lysine 54 is modified to N6-succinyllysine; alternate. Lysine 57 bears the N6-acetyllysine mark.

The protein belongs to the ATPase protein 8 family. In terms of assembly, component of the ATP synthase complex composed at least of ATP5F1A/subunit alpha, ATP5F1B/subunit beta, ATP5MC1/subunit c (homooctomer), MT-ATP6/subunit a, MT-ATP8/subunit 8, ATP5ME/subunit e, ATP5MF/subunit f, ATP5MG/subunit g, ATP5MK/subunit k, ATP5MJ/subunit j, ATP5F1C/subunit gamma, ATP5F1D/subunit delta, ATP5F1E/subunit epsilon, ATP5PF/subunit F6, ATP5PB/subunit b, ATP5PD/subunit d, ATP5PO/subunit OSCP. ATP synthase complex consists of a soluble F(1) head domain (subunits alpha(3) and beta(3)) - the catalytic core - and a membrane F(0) domain - the membrane proton channel (subunits c, a, 8, e, f, g, k and j). These two domains are linked by a central stalk (subunits gamma, delta, and epsilon) rotating inside the F1 region and a stationary peripheral stalk (subunits F6, b, d, and OSCP). Interacts with PRICKLE3.

Its subcellular location is the mitochondrion membrane. Functionally, subunit 8, of the mitochondrial membrane ATP synthase complex (F(1)F(0) ATP synthase or Complex V) that produces ATP from ADP in the presence of a proton gradient across the membrane which is generated by electron transport complexes of the respiratory chain. ATP synthase complex consist of a soluble F(1) head domain - the catalytic core - and a membrane F(1) domain - the membrane proton channel. These two domains are linked by a central stalk rotating inside the F(1) region and a stationary peripheral stalk. During catalysis, ATP synthesis in the catalytic domain of F(1) is coupled via a rotary mechanism of the central stalk subunits to proton translocation. In vivo, can only synthesize ATP although its ATP hydrolase activity can be activated artificially in vitro. Part of the complex F(0) domain. The chain is ATP synthase F(0) complex subunit 8 from Equus caballus (Horse).